The following is an 881-amino-acid chain: Valine--tRNA ligase (881 aa).

The short motif at 76 to 86 is the 'HIGH' region element; sequence PTVSGSLHIGH. The disordered stretch occupies residues 493–526; that stretch reads DSPILPDESQLPVDPSSQAPEGYTEDQRGKPGGF. Residues 608-612 carry the 'KMSKS' region motif; that stretch reads KMSKS. Lys611 is an ATP binding site.

It belongs to the class-I aminoacyl-tRNA synthetase family. ValS type 2 subfamily. In terms of assembly, monomer.

The protein resides in the cytoplasm. The enzyme catalyses tRNA(Val) + L-valine + ATP = L-valyl-tRNA(Val) + AMP + diphosphate. Catalyzes the attachment of valine to tRNA(Val). As ValRS can inadvertently accommodate and process structurally similar amino acids such as threonine, to avoid such errors, it has a 'posttransfer' editing activity that hydrolyzes mischarged Thr-tRNA(Val) in a tRNA-dependent manner. The polypeptide is Valine--tRNA ligase (Thermobifida fusca (strain YX)).